A 567-amino-acid polypeptide reads, in one-letter code: uncharacterized protein (567 aa).

Belongs to the protein kinase superfamily. ADCK protein kinase family.

This is an uncharacterized protein from Synechocystis sp. (strain ATCC 27184 / PCC 6803 / Kazusa).